The following is a 585-amino-acid chain: Rab GTPase-binding effector protein 2 (585 aa).

Alanine 2 bears the N-acetylalanine mark. The stretch at 27-183 (QEGAKVEAES…ELIQEIQRRP (157 aa)) forms a coiled coil. Disordered stretches follow at residues 178-265 (EIQR…ASLV), 381-408 (ENQG…EESL), and 491-515 (EEQS…EEAQ). Serine 188, serine 192, serine 198, and serine 202 each carry phosphoserine. Positions 288–540 (NQWEQLQLEG…QAELETSEQV (253 aa)) form a coiled coil. A compositionally biased stretch (basic and acidic residues) spans 491-501 (EEQSKAKRQEV).

This sequence belongs to the rabaptin family. Heterodimer with RABGEF1. The dimer binds RAB5A that has been activated by GTP-binding. Interacts with SDCCAG8; this interaction is important for ciliogenesis regulation. Interacts with RAB4; this interaction may mediate VEGFR2 cell surface expression.

Its subcellular location is the cytoplasm. It localises to the early endosome. The protein localises to the cytoskeleton. It is found in the microtubule organizing center. The protein resides in the centrosome. Its subcellular location is the cilium basal body. Plays a role in membrane trafficking and in homotypic early endosome fusion. Participates in arteriogenesis by regulating vascular endothelial growth factor receptor 2/VEGFR2 cell surface expression and endosomal trafficking. By interacting with SDCCAG8, localizes to centrosomes and plays a critical role in ciliogenesis. The protein is Rab GTPase-binding effector protein 2 (RABEP2) of Bos taurus (Bovine).